The sequence spans 268 residues: Tryptophan synthase alpha chain (268 aa).

Active-site proton acceptor residues include Glu49 and Asp60.

Belongs to the TrpA family. In terms of assembly, tetramer of two alpha and two beta chains.

The catalysed reaction is (1S,2R)-1-C-(indol-3-yl)glycerol 3-phosphate + L-serine = D-glyceraldehyde 3-phosphate + L-tryptophan + H2O. Its pathway is amino-acid biosynthesis; L-tryptophan biosynthesis; L-tryptophan from chorismate: step 5/5. Its function is as follows. The alpha subunit is responsible for the aldol cleavage of indoleglycerol phosphate to indole and glyceraldehyde 3-phosphate. The chain is Tryptophan synthase alpha chain from Serratia proteamaculans (strain 568).